The sequence spans 514 residues: ATP synthase subunit alpha (514 aa).

Position 170–177 (170–177) interacts with ATP; sequence GDRQIGKT.

This sequence belongs to the ATPase alpha/beta chains family. In terms of assembly, F-type ATPases have 2 components, CF(1) - the catalytic core - and CF(0) - the membrane proton channel. CF(1) has five subunits: alpha(3), beta(3), gamma(1), delta(1), epsilon(1). CF(0) has three main subunits: a(1), b(2) and c(9-12). The alpha and beta chains form an alternating ring which encloses part of the gamma chain. CF(1) is attached to CF(0) by a central stalk formed by the gamma and epsilon chains, while a peripheral stalk is formed by the delta and b chains.

The protein localises to the cell inner membrane. The catalysed reaction is ATP + H2O + 4 H(+)(in) = ADP + phosphate + 5 H(+)(out). Its function is as follows. Produces ATP from ADP in the presence of a proton gradient across the membrane. The alpha chain is a regulatory subunit. This is ATP synthase subunit alpha from Marinobacter nauticus (strain ATCC 700491 / DSM 11845 / VT8) (Marinobacter aquaeolei).